The primary structure comprises 1163 residues: AF4/FMR2 family member 4 (1163 aa).

Over residues 1 to 19 (MNREDRNVLRMKERERRNQ) the composition is skewed to basic and acidic residues. Disordered regions lie at residues 1 to 48 (MNRE…EDKL), 76 to 312 (AIPK…ASGD), 324 to 904 (THSW…PRRT), and 1034 to 1073 (NSYN…SSGA). Residues 115–128 (PSTSQSQKRSSGLQ) show a composition bias toward polar residues. Position 120 is a phosphoserine (Ser-120). Composition is skewed to low complexity over residues 129 to 148 (SGHS…NSSG) and 177 to 194 (RSSS…NSSH). Positions 198-217 (HGNDHHSKEHQRSKSPRDPD) are enriched in basic and acidic residues. A Phosphoserine modification is found at Ser-212. Composition is skewed to polar residues over residues 227–251 (PFSS…SMLQ), 273–285 (EHYS…NSMT), and 350–375 (KESQ…NGHQ). Residues Ser-387, Ser-388, Ser-389, and Ser-392 each carry the phosphoserine modification. The span at 403–412 (PRSTPGSNSE) shows a compositional bias: polar residues. A compositionally biased stretch (basic and acidic residues) spans 413 to 429 (PSHHNSEGADNSRDDSS). Positions 430 to 462 (SHSGSESSSGSDSESESSSSDSEANEPSQSASP) are enriched in low complexity. Phosphoserine is present on residues Ser-487, Ser-490, and Ser-491. Composition is skewed to polar residues over residues 488-501 (PASS…SSQG), 510-528 (GTGN…SSAT), and 549-560 (SPAQSDSTTQRR). Phosphoserine is present on Ser-549. Basic and acidic residues predominate over residues 568 to 586 (KKAEKAAAEEPRGGLKIES). Lys-583 participates in a covalent cross-link: Glycyl lysine isopeptide (Lys-Gly) (interchain with G-Cter in SUMO2). A compositionally biased stretch (basic residues) spans 599–612 (SRHKAATKGSRKPN). The span at 613-627 (IKKESKSSPRPTAEK) shows a compositional bias: basic and acidic residues. Residue Ser-671 is modified to Phosphoserine. Thr-674 is subject to Phosphothreonine. 4 positions are modified to phosphoserine: Ser-680, Ser-694, Ser-703, and Ser-706. Tyr-712 carries the phosphotyrosine modification. Composition is skewed to basic and acidic residues over residues 730–761 (PYKE…EKVS), 769–789 (KNED…DKNS), and 799–811 (ESSK…EKDL). Position 814 is a phosphoserine (Ser-814). Lys-822 is subject to N6-acetyllysine. Phosphoserine occurs at positions 836, 1043, 1055, 1058, and 1062. Over residues 836–862 (SQSSSLKSSSNSNKETSGSSKNSSSTS) the composition is skewed to low complexity. Positions 1062–1073 (SPGNSGNYSSGA) are enriched in low complexity.

Belongs to the AF4 family. In terms of assembly, component of the super elongation complex (SEC), at least composed of EAF1, EAF2, CDK9, MLLT3/AF9, AFF (AFF1 or AFF4), the P-TEFb complex and ELL (ELL, ELL2 or ELL3). Interacts with ELL3; the interaction is direct. Interacts with ELL2; the interaction is direct and leads to stabilize ELL2 and prevent ELL2 ubiquitination and degradation. Post-translationally, dephosphorylated at Ser-549 by the PNUTS-PP1 complex, promoting RNA polymerase II transcription pause-release. As to expression, ubiquitously expressed. Strongly expressed in heart, placenta, skeletal muscle, pancreas and to a lower extent in brain.

It is found in the nucleus. The protein localises to the chromosome. Its function is as follows. Key component of the super elongation complex (SEC), a complex required to increase the catalytic rate of RNA polymerase II transcription by suppressing transient pausing by the polymerase at multiple sites along the DNA. In the SEC complex, AFF4 acts as a central scaffold that recruits other factors through direct interactions with ELL proteins (ELL, ELL2 or ELL3) and the P-TEFb complex. In case of infection by HIV-1 virus, the SEC complex is recruited by the viral Tat protein to stimulate viral gene expression. This Homo sapiens (Human) protein is AF4/FMR2 family member 4 (AFF4).